Here is a 156-residue protein sequence, read N- to C-terminus: ATP synthase subunit b (156 aa).

The chain crosses the membrane as a helical span at residues 7–27 (LFVQAIVFLILVLFTMKFVWP).

The protein belongs to the ATPase B chain family. As to quaternary structure, F-type ATPases have 2 components, F(1) - the catalytic core - and F(0) - the membrane proton channel. F(1) has five subunits: alpha(3), beta(3), gamma(1), delta(1), epsilon(1). F(0) has three main subunits: a(1), b(2) and c(10-14). The alpha and beta chains form an alternating ring which encloses part of the gamma chain. F(1) is attached to F(0) by a central stalk formed by the gamma and epsilon chains, while a peripheral stalk is formed by the delta and b chains.

It localises to the cell inner membrane. F(1)F(0) ATP synthase produces ATP from ADP in the presence of a proton or sodium gradient. F-type ATPases consist of two structural domains, F(1) containing the extramembraneous catalytic core and F(0) containing the membrane proton channel, linked together by a central stalk and a peripheral stalk. During catalysis, ATP synthesis in the catalytic domain of F(1) is coupled via a rotary mechanism of the central stalk subunits to proton translocation. In terms of biological role, component of the F(0) channel, it forms part of the peripheral stalk, linking F(1) to F(0). The protein is ATP synthase subunit b of Acidovorax sp. (strain JS42).